A 558-amino-acid polypeptide reads, in one-letter code: Phosphatidylserine lipase ABHD16A (558 aa).

A run of 2 helical transmembrane segments spans residues I60–F80 and V93–L113. Topologically, residues R114–L558 are cytoplasmic. The AB hydrolase-1 domain occupies L281 to L407. Residues S355, D430, and H507 each act as charge relay system in the active site.

This sequence belongs to the AB hydrolase superfamily. ABHD16 family.

Its subcellular location is the membrane. It catalyses the reaction 1-heptadecanoyl-2-(5Z,8Z,11Z,14Z-eicosatetraenoyl)-sn-glycero-3-phosphoserine + H2O = 1-heptadecanoyl-sn-glycero-3-phosphoserine + (5Z,8Z,11Z,14Z)-eicosatetraenoate + H(+). The catalysed reaction is 1-hexadecanoyl-2-(9Z-octadecenoyl)-sn-glycero-3-phospho-L-serine + H2O = 1-hexadecanoyl-sn-glycero-3-phospho-L-serine + (9Z)-octadecenoate + H(+). The enzyme catalyses 1-octadecanoyl-2-(9Z,12Z-octadecadienoyl)-sn-glycero-3-phosphoserine + H2O = 1-octadecanoyl-sn-glycero-3-phosphoserine + (9Z,12Z)-octadecadienoate + H(+). It carries out the reaction 1-heptadecanoyl-2-(5Z,8Z,11Z,14Z-eicosatetraenoyl)-sn-glycero-3-phosphocholine + H2O = 1-heptadecanoyl-sn-glycero-3-phosphocholine + (5Z,8Z,11Z,14Z)-eicosatetraenoate + H(+). It catalyses the reaction 1-hexadecanoyl-2-(9Z-octadecenoyl)-sn-glycero-3-phosphoglycerol + H2O = 1-hexadecanoyl-sn-glycero-3-phosphoglycerol + (9Z)-octadecenoate + H(+). The catalysed reaction is 1-hexadecanoyl-2-(9Z-octadecenoyl)-sn-glycero-3-phospho-(1D-myo-inositol) + H2O = 1-hexadecanoyl-sn-glycero-3-phospho-(1D-myo-inositol) + (9Z)-octadecenoate + H(+). The enzyme catalyses 1-heptadecanoyl-2-(5Z,8Z,11Z,14Z-eicosatetraenoyl)-sn-glycero-3-phosphoethanolamine + H2O = 1-heptadecanoyl-sn-glycero-3-phosphoethanolamine + (5Z,8Z,11Z,14Z)-eicosatetraenoate + H(+). It carries out the reaction 1-hexadecanoyl-2-(9Z-octadecenoyl)-sn-glycero-3-phospho-(1'-sn-glycerol) + H2O = 1-hexadecanoyl-sn-glycero-3-phospho-(1'-sn-glycerol) + (9Z)-octadecenoate + H(+). It catalyses the reaction Hydrolyzes glycerol monoesters of long-chain fatty acids.. The catalysed reaction is 1-tetradecanoylglycerol + H2O = tetradecanoate + glycerol + H(+). The enzyme catalyses 2-hexadecanoylglycerol + H2O = glycerol + hexadecanoate + H(+). It carries out the reaction 1-(9Z-octadecenoyl)-glycerol + H2O = glycerol + (9Z)-octadecenoate + H(+). It catalyses the reaction 2-(9Z-octadecenoyl)-glycerol + H2O = glycerol + (9Z)-octadecenoate + H(+). The catalysed reaction is 2-(9Z,12Z-octadecadienoyl)-glycerol + H2O = (9Z,12Z)-octadecadienoate + glycerol + H(+). The enzyme catalyses 1-(5Z,8Z,11Z,14Z-eicosatetraenoyl)-glycerol + H2O = glycerol + (5Z,8Z,11Z,14Z)-eicosatetraenoate + H(+). It carries out the reaction 2-(5Z,8Z,11Z,14Z-eicosatetraenoyl)-glycerol + H2O = glycerol + (5Z,8Z,11Z,14Z)-eicosatetraenoate + H(+). It catalyses the reaction prostaglandin D2-1-glycerol ester + H2O = prostaglandin D2 + glycerol + H(+). The catalysed reaction is 2-glyceryl-15-deoxy-Delta(12,14)-prostaglandin J2 + H2O = 15-deoxy-Delta(12,14)-prostaglandin J2 + glycerol + H(+). The enzyme catalyses 1-(9Z,12Z-octadecadienoyl)-glycerol + H2O = (9Z,12Z)-octadecadienoate + glycerol + H(+). In terms of biological role, phosphatidylserine (PS) lipase that mediates the hydrolysis of phosphatidylserine to generate lysophosphatidylserine (LPS). LPS constitutes a class of signaling lipids that regulates immunological and neurological processes. Has no activity towards diacylglycerol, triacylglycerol or lysophosphatidylserine lipase. Also has monoacylglycerol lipase activity, with preference for 1-(9Z,12Z-octadecadienoyl)-glycerol (1-LG) and 2-glyceryl-15-deoxy-Delta(12,14)-prostaglandin J2 (15d-PGJ(2)-G). This is Phosphatidylserine lipase ABHD16A from Pongo abelii (Sumatran orangutan).